A 118-amino-acid polypeptide reads, in one-letter code: Small ribosomal subunit protein uS13 (118 aa).

A disordered region spans residues 94–118; sequence GLPVRGQRTKTNARTRKGPRKPIKK.

Belongs to the universal ribosomal protein uS13 family. In terms of assembly, part of the 30S ribosomal subunit. Forms a loose heterodimer with protein S19. Forms two bridges to the 50S subunit in the 70S ribosome.

Its function is as follows. Located at the top of the head of the 30S subunit, it contacts several helices of the 16S rRNA. In the 70S ribosome it contacts the 23S rRNA (bridge B1a) and protein L5 of the 50S subunit (bridge B1b), connecting the 2 subunits; these bridges are implicated in subunit movement. Contacts the tRNAs in the A and P-sites. This chain is Small ribosomal subunit protein uS13, found in Mannheimia succiniciproducens (strain KCTC 0769BP / MBEL55E).